A 469-amino-acid polypeptide reads, in one-letter code: MTTKTRFAPSPTGFLHVGGARTALYSWLQARANNGEFVLRIEDTDIERSTQAACDAILEGMNWLGLTWDEGPYYQTKRFDRYNEIIAQMLEQGTAYKCYCSRERIDALREAQAANGEAQKYDGCCRDLPARDTDEPFVVRFKNPIGGSVVFDDHVRGRIEFSNDALDDLIIARTDGVPTYNFCVVVDDWDMGITCVVRGEDHINNTPRQINILKALGAPIPEYAHVSMILGDDGAKLSKRHGAVSVMQYRDDGYLPEALLNYLVRLGWSHGDQEVFSLEEMKQLFKLDDINKAPSAFNTEKLVWLNQHYIKTLDPEYVASHLQWHMDDQKIDTSNGPALSAVVTALAERAKTLKELAASSRYFYEDFAEFDAEQAKKHLRGVALEPLQLVQQKLAALTEWTVEAIHQAIEATATELEVGMGKVGMPLRVAVTGAGQSPGLDITLFLIGKARSEQRISKAIEFVADRINS.

Positions Pro-9 to Gly-19 match the 'HIGH' region motif. Residues Cys-98, Cys-100, Cys-125, and Asp-127 each contribute to the Zn(2+) site. A 'KMSKS' region motif is present at residues Lys-236–Arg-240. Residue Lys-239 coordinates ATP.

It belongs to the class-I aminoacyl-tRNA synthetase family. Glutamate--tRNA ligase type 1 subfamily. In terms of assembly, monomer. The cofactor is Zn(2+).

Its subcellular location is the cytoplasm. It catalyses the reaction tRNA(Glu) + L-glutamate + ATP = L-glutamyl-tRNA(Glu) + AMP + diphosphate. Catalyzes the attachment of glutamate to tRNA(Glu) in a two-step reaction: glutamate is first activated by ATP to form Glu-AMP and then transferred to the acceptor end of tRNA(Glu). This Shewanella sp. (strain ANA-3) protein is Glutamate--tRNA ligase.